A 121-amino-acid polypeptide reads, in one-letter code: Small ribosomal subunit protein uS13 (121 aa).

Residues 93–121 form a disordered region; it reads RGLPVRGQNSKNNARTRKGPRRTVANKKK. The segment covering 106 to 121 has biased composition (basic residues); that stretch reads ARTRKGPRRTVANKKK.

The protein belongs to the universal ribosomal protein uS13 family. As to quaternary structure, part of the 30S ribosomal subunit. Forms a loose heterodimer with protein S19. Forms two bridges to the 50S subunit in the 70S ribosome.

In terms of biological role, located at the top of the head of the 30S subunit, it contacts several helices of the 16S rRNA. In the 70S ribosome it contacts the 23S rRNA (bridge B1a) and protein L5 of the 50S subunit (bridge B1b), connecting the 2 subunits; these bridges are implicated in subunit movement. Contacts the tRNAs in the A and P-sites. The chain is Small ribosomal subunit protein uS13 from Bacillus subtilis (strain 168).